Consider the following 156-residue polypeptide: Cyanate hydratase (156 aa).

Residues Arg-96, Glu-99, and Ser-122 contribute to the active site.

Belongs to the cyanase family. Homodecamer composed of five homodimers.

The catalysed reaction is cyanate + hydrogencarbonate + 3 H(+) = NH4(+) + 2 CO2. Functionally, catalyzes the reaction of cyanate with bicarbonate to produce ammonia and carbon dioxide. The chain is Cyanate hydratase (cynS) from Escherichia coli O157:H7.